A 255-amino-acid polypeptide reads, in one-letter code: MAASTMSICSSACTNSWQVDDCPESCCELPCGTPSCCAPAPCLTLVCTPVSCVSSPCCQAACEPSACQSGCTSSCTPSCCQQSSCQPACCTSSPCQQACCVPVCCKPVCCVPVCCGASSCCQQSSCQPACCASSSCQQSCRVPVCCKAVCCVPTCSESSSSCCQQSSCQPACCTSSPCQQSCCVSVCCKPVCCKSICCVPVCSGASSPCCQQSSCQPACCTSSCCRPSSSVSLLCRPVCSRPASCSFSSGQKSSC.

Tandem repeats lie at residues 26 to 30 (CCELP), 36 to 40 (CCAPA), 57 to 61 (CCQAA), 79 to 83 (CCQQS), 89 to 93 (CCTSS), 99 to 103 (CCVPV), 104 to 108 (CCKPV), 109 to 113 (CCVPV), 114 to 118 (CCGAS), 120 to 124 (CCQQS), 130 to 134 (CCASS), 145 to 149 (CCKAV), 150 to 154 (CCVPT), 162 to 166 (CCQQS), 172 to 176 (CCTSS), 182 to 186 (CCVSV), 187 to 191 (CCKPV), 192 to 196 (CCKSI), 197 to 201 (CCVPV), 209 to 213 (CCQQS), 219 to 223 (CCTSS), and 224 to 228 (CCRPS). The interval 26–228 (CCELPCGTPS…CCTSSCCRPS (203 aa)) is 22 X 5 AA repeats of C-C-X(3).

The protein belongs to the KRTAP type 10 family. As to quaternary structure, interacts with hair keratins. As to expression, restricted to a narrow region of the hair fiber cuticle, lying approximately 20 cell layers above the apex of the dermal papilla of the hair root; not detected in any other tissues.

Its function is as follows. In the hair cortex, hair keratin intermediate filaments are embedded in an interfilamentous matrix, consisting of hair keratin-associated proteins (KRTAP), which are essential for the formation of a rigid and resistant hair shaft through their extensive disulfide bond cross-linking with abundant cysteine residues of hair keratins. The matrix proteins include the high-sulfur and high-glycine-tyrosine keratins. This is Keratin-associated protein 10-2 (KRTAP10-2) from Homo sapiens (Human).